Reading from the N-terminus, the 101-residue chain is Small ribosomal subunit protein uS14 (101 aa).

Belongs to the universal ribosomal protein uS14 family. In terms of assembly, part of the 30S ribosomal subunit. Contacts proteins S3 and S10.

Functionally, binds 16S rRNA, required for the assembly of 30S particles and may also be responsible for determining the conformation of the 16S rRNA at the A site. The polypeptide is Small ribosomal subunit protein uS14 (Polaromonas naphthalenivorans (strain CJ2)).